A 257-amino-acid chain; its full sequence is MLILLSCAKTMSDVSKTKTPLTTFPGFRKEAAEVALQMSQFSVEELERLLKVNPKIAVENYRRYQAFHSEGTRELPALLAYTGIVFKRVHPQDFSEEDFCYAQDHLRLTSFCYGVLRPLDMIRPYRLEGDVRLPEPGNRTMFDYWKPILTDRFIADIKKVGGVLCNLASDEMRGLFDWKRVEKEVRVITPEFHVWKNGKLATVVVYTKMSRGEMTRYILKNRIESVEQLKTFAWEGFEFNEQLSDETKYVFTNGKTE.

The protein belongs to the UPF0246 family.

The sequence is that of UPF0246 protein BF4021 from Bacteroides fragilis (strain YCH46).